The primary structure comprises 186 residues: Tumor necrosis factor alpha-induced protein 8-like protein 1 (186 aa).

This sequence belongs to the TNFAIP8 family.

The protein resides in the cytoplasm. The chain is Tumor necrosis factor alpha-induced protein 8-like protein 1 (TNFAIP8L1) from Gallus gallus (Chicken).